Consider the following 333-residue polypeptide: Holliday junction branch migration complex subunit RuvB (333 aa).

The segment at 1-173 is large ATPase domain (RuvB-L); that stretch reads MTAPENLDAA…FGIIEHLEYY (173 aa). ATP contacts are provided by residues Leu-11, Arg-12, Gly-53, Lys-56, Thr-57, Thr-58, 120–122, Arg-163, Tyr-173, and Arg-210; that span reads EDF. Thr-57 is a binding site for Mg(2+). Positions 174-244 are small ATPAse domain (RuvB-S); it reads TAEEIATNLL…RAQSALDKLG (71 aa). Residues 247–333 are head domain (RuvB-H); the sequence is SAGLDDRDKK…IDDGNGIFLN (87 aa). Arg-302 and Arg-307 together coordinate DNA.

This sequence belongs to the RuvB family. In terms of assembly, homohexamer. Forms an RuvA(8)-RuvB(12)-Holliday junction (HJ) complex. HJ DNA is sandwiched between 2 RuvA tetramers; dsDNA enters through RuvA and exits via RuvB. An RuvB hexamer assembles on each DNA strand where it exits the tetramer. Each RuvB hexamer is contacted by two RuvA subunits (via domain III) on 2 adjacent RuvB subunits; this complex drives branch migration. In the full resolvosome a probable DNA-RuvA(4)-RuvB(12)-RuvC(2) complex forms which resolves the HJ.

It localises to the cytoplasm. It catalyses the reaction ATP + H2O = ADP + phosphate + H(+). Its function is as follows. The RuvA-RuvB-RuvC complex processes Holliday junction (HJ) DNA during genetic recombination and DNA repair, while the RuvA-RuvB complex plays an important role in the rescue of blocked DNA replication forks via replication fork reversal (RFR). RuvA specifically binds to HJ cruciform DNA, conferring on it an open structure. The RuvB hexamer acts as an ATP-dependent pump, pulling dsDNA into and through the RuvAB complex. RuvB forms 2 homohexamers on either side of HJ DNA bound by 1 or 2 RuvA tetramers; 4 subunits per hexamer contact DNA at a time. Coordinated motions by a converter formed by DNA-disengaged RuvB subunits stimulates ATP hydrolysis and nucleotide exchange. Immobilization of the converter enables RuvB to convert the ATP-contained energy into a lever motion, pulling 2 nucleotides of DNA out of the RuvA tetramer per ATP hydrolyzed, thus driving DNA branch migration. The RuvB motors rotate together with the DNA substrate, which together with the progressing nucleotide cycle form the mechanistic basis for DNA recombination by continuous HJ branch migration. Branch migration allows RuvC to scan DNA until it finds its consensus sequence, where it cleaves and resolves cruciform DNA. This Deinococcus radiodurans (strain ATCC 13939 / DSM 20539 / JCM 16871 / CCUG 27074 / LMG 4051 / NBRC 15346 / NCIMB 9279 / VKM B-1422 / R1) protein is Holliday junction branch migration complex subunit RuvB.